We begin with the raw amino-acid sequence, 92 residues long: Small ribosomal subunit protein uS19c (92 aa).

The protein belongs to the universal ribosomal protein uS19 family.

It is found in the plastid. It localises to the chloroplast. In terms of biological role, protein S19 forms a complex with S13 that binds strongly to the 16S ribosomal RNA. The chain is Small ribosomal subunit protein uS19c from Psilotum nudum (Whisk fern).